The following is a 641-amino-acid chain: Macrolide export ATP-binding/permease protein MacB (641 aa).

The ABC transporter domain occupies 2–236; sequence IFLKNICKNI…LILKTMPKEK (235 aa). 34-41 contacts ATP; sequence GQSGSGKT. The next 4 membrane-spanning stretches (helical) occupy residues 265 to 285, 519 to 539, 571 to 591, and 604 to 624; these read ILTM…VALG, ACVA…IMLV, MICT…IFAF, and AYSV…FGFF.

Belongs to the ABC transporter superfamily. Macrolide exporter (TC 3.A.1.122) family. As to quaternary structure, homodimer.

The protein resides in the cell inner membrane. Functionally, non-canonical ABC transporter that contains transmembrane domains (TMD), which form a pore in the inner membrane, and an ATP-binding domain (NBD), which is responsible for energy generation. Confers resistance against macrolides. This Campylobacter jejuni subsp. jejuni serotype O:2 (strain ATCC 700819 / NCTC 11168) protein is Macrolide export ATP-binding/permease protein MacB.